Reading from the N-terminus, the 580-residue chain is CDKN2A-interacting protein (580 aa).

Ala2 carries the post-translational modification N-acetylalanine. Positions 19-133 (VEALRCDGET…KVKKRGISSS (115 aa)) constitute an XRN2-binding (XTBD) domain. The interval 129–356 (GISSSNEGVE…PKSSSSTNTS (228 aa)) is disordered. Residue Ser131 is modified to Phosphoserine. Positions 155–167 (EQDHAKTSAKTER) are enriched in basic and acidic residues. Residues 168-179 (ASAQQENSSTCI) are compositionally biased toward polar residues. Lys184 participates in a covalent cross-link: Glycyl lysine isopeptide (Lys-Gly) (interchain with G-Cter in SUMO1). The segment covering 185–228 (SESGNSARSSGISSQNSSTSDGDRSVSSQSSSSVSSQVTTAGSG) has biased composition (low complexity). A compositionally biased stretch (basic and acidic residues) spans 231-240 (SEAEAPDKHG). At Ser241 the chain carries Phosphoserine. Residues 248–269 (LKSSVNSHMTQSTDSRQQSGSP) show a composition bias toward polar residues. 2 stretches are compositionally biased toward low complexity: residues 274 to 313 (LEGSSASASQSSSEIEVPLLGSSGSSEVELPLLSSKPSSE) and 321 to 356 (SKTSSEASVSSSVAKNSSSSGTSLLTPKSSSSTNTS). Thr346 carries the post-translational modification Phosphothreonine. Phosphoserine is present on Ser389. Residues 462–537 (NHGELLNAAI…SREALKLFLK (76 aa)) enclose the DRBM domain.

This sequence belongs to the CARF family. Interacts with CDKN2A/p14ARF, p53/TP53 and MDM2. Interacts with CHEK2 and MAPK3. Interacts with XRN2. Post-translationally, may be ubiquitinated. In terms of tissue distribution, ubiquitously expressed.

Its subcellular location is the nucleus. It is found in the nucleoplasm. Regulates DNA damage response in a dose-dependent manner through a number of signaling pathways involved in cell proliferation, apoptosis and senescence. The sequence is that of CDKN2A-interacting protein (CDKN2AIP) from Homo sapiens (Human).